The following is a 273-amino-acid chain: Dermonecrotic toxin SdSicTox-betaIF1 (273 aa).

Residue His5 is part of the active site. Mg(2+) is bound by residues Glu25 and Asp27. His41 serves as the catalytic Nucleophile. Cystine bridges form between Cys45-Cys51 and Cys47-Cys189.

It belongs to the arthropod phospholipase D family. Class II subfamily. Mg(2+) is required as a cofactor. Expressed by the venom gland.

Its subcellular location is the secreted. The catalysed reaction is an N-(acyl)-sphingosylphosphocholine = an N-(acyl)-sphingosyl-1,3-cyclic phosphate + choline. It carries out the reaction an N-(acyl)-sphingosylphosphoethanolamine = an N-(acyl)-sphingosyl-1,3-cyclic phosphate + ethanolamine. It catalyses the reaction a 1-acyl-sn-glycero-3-phosphocholine = a 1-acyl-sn-glycero-2,3-cyclic phosphate + choline. The enzyme catalyses a 1-acyl-sn-glycero-3-phosphoethanolamine = a 1-acyl-sn-glycero-2,3-cyclic phosphate + ethanolamine. In terms of biological role, dermonecrotic toxins cleave the phosphodiester linkage between the phosphate and headgroup of certain phospholipids (sphingolipid and lysolipid substrates), forming an alcohol (often choline) and a cyclic phosphate. This toxin acts on sphingomyelin (SM). It may also act on ceramide phosphoethanolamine (CPE), lysophosphatidylcholine (LPC) and lysophosphatidylethanolamine (LPE), but not on lysophosphatidylserine (LPS), and lysophosphatidylglycerol (LPG). It acts by transphosphatidylation, releasing exclusively cyclic phosphate products as second products. Induces dermonecrosis, hemolysis, increased vascular permeability, edema, inflammatory response, and platelet aggregation. This is Dermonecrotic toxin SdSicTox-betaIF1 from Sicarius cf. damarensis (strain GJB-2008) (Six-eyed sand spider).